Reading from the N-terminus, the 71-residue chain is uncharacterized protein (71 aa).

A helical membrane pass occupies residues 24–44 (FGGGGLSTAIYSIFAFFSIPL).

The protein localises to the membrane. This is an uncharacterized protein from Schizosaccharomyces pombe (strain 972 / ATCC 24843) (Fission yeast).